A 607-amino-acid chain; its full sequence is Replication factor C large subunit (607 aa).

Residue 55–62 (GPAGIGKT) participates in ATP binding. Positions 468 to 607 (EEEKPQKEGS…PKNQKTLFDF (140 aa)) are disordered. Residues 506–518 (TSEKKENSEKKEN) show a composition bias toward basic and acidic residues. Over residues 548–558 (SESVEQKTSSK) the composition is skewed to polar residues.

This sequence belongs to the activator 1 small subunits family. RfcL subfamily. In terms of assembly, heteromultimer composed of small subunits (RfcS) and large subunits (RfcL).

Functionally, part of the RFC clamp loader complex which loads the PCNA sliding clamp onto DNA. The protein is Replication factor C large subunit of Methanosarcina acetivorans (strain ATCC 35395 / DSM 2834 / JCM 12185 / C2A).